Here is a 51-residue protein sequence, read N- to C-terminus: U-Asilidin(1)-Mar1a (51 aa).

The first 23 residues, 1–23, serve as a signal peptide directing secretion; sequence MANYIEVFSVLAIIFATVLAALA. 3 disulfide bridges follow: C26-C40, C33-C44, and C39-C49.

The protein belongs to the asilidin-1 family. In terms of tissue distribution, expressed by the venom gland. Is the most highly expressed peptide and is around 3000 times higher expressed in the thoracic glands compared to its body tissues.

The protein localises to the secreted. Functionally, induces neurotoxic effect on honeybees, including slow movements, disorientation and paralysis. Since it provokes similar symptoms than omega-atracotoxin, it is probable that it acts in the same way by inhibiting voltage-gated calcium channels. The chain is U-Asilidin(1)-Mar1a from Machimus arthriticus (Breck robberfly).